The chain runs to 360 residues: GTP 3',8-cyclase (360 aa).

A Radical SAM core domain is found at 33-251 (RFGRSATDLR…LQPHFRLRPD (219 aa)). GTP is bound at residue R42. C49 and C53 together coordinate [4Fe-4S] cluster. Y55 contacts S-adenosyl-L-methionine. C56 contributes to the [4Fe-4S] cluster binding site. Residue R93 participates in GTP binding. Residue G97 participates in S-adenosyl-L-methionine binding. Position 124 (T124) interacts with GTP. S148 is an S-adenosyl-L-methionine binding site. K185 contributes to the GTP binding site. M219 serves as a coordination point for S-adenosyl-L-methionine. C287 and C290 together coordinate [4Fe-4S] cluster. GTP is bound at residue 292–294 (RTR). C304 contacts [4Fe-4S] cluster.

The protein belongs to the radical SAM superfamily. MoaA family. In terms of assembly, monomer and homodimer. The cofactor is [4Fe-4S] cluster.

The enzyme catalyses GTP + AH2 + S-adenosyl-L-methionine = (8S)-3',8-cyclo-7,8-dihydroguanosine 5'-triphosphate + 5'-deoxyadenosine + L-methionine + A + H(+). It functions in the pathway cofactor biosynthesis; molybdopterin biosynthesis. Functionally, catalyzes the cyclization of GTP to (8S)-3',8-cyclo-7,8-dihydroguanosine 5'-triphosphate. The chain is GTP 3',8-cyclase from Mycobacterium marinum (strain ATCC BAA-535 / M).